The chain runs to 203 residues: Hydra actinoporin-like toxin 2 (203 aa).

The N-terminal stretch at 1 to 21 (MLSYLCFGCFLVSASLEIACG) is a signal peptide. Positions 175–177 (RGG) match the Cell attachment site motif.

The protein belongs to the actinoporin family. HALT subfamily. In terms of assembly, octamer or nonamer in membranes. Monomer in the soluble state. In vitro, interacts with folate receptor alpha (of target organism). In terms of tissue distribution, strongly expressed in the gland and mucous cells in the endoderm.

The protein resides in the nematocyst. It is found in the secreted. It localises to the target cell membrane. Pore-forming protein that forms hydrophilic pores and causes cytolysis. Compared to equinatoxin-2 (AC P61914), it reveals lower cytolysis activity (5-12-fold difference, tested on erythrocytes), a larger pore size (probably 2-3 nm) and different affinity to membrane lipids (100-fold lower affinity to sphingomyelin). Binds to sulfatides (SFT). Shows cytolytic activity on HeLa cells, with a different potency than its paralogs (from most potent to less potent: HALT-4&gt;HALT-6~HALT-1&gt;HALT-3&gt;HALT-7&gt;HALT-2). Pore formation is a multi-step process that involves specific recognition of membrane lipid by a protein aromatic residues rich region, firm binding to the membrane (mainly driven by hydrophobic interactions) accompanied by the transfer of the N-terminal region to the lipid-water interface and finally pore formation after oligomerization of monomers. In vitro, binds to the folate receptor alpha (FOLR1), a GPI-anchored membrane protein that plays a major role in the uptake of folate/folic acid into cells via endocytosis, suggesting a possible involvement of this receptor in the mechanism of HALT-1-induced cell lysis. In vivo, does not cause visible paralysis in larvae of the blowfly Sarcophaga faculata, the most common arthropod prey of Hydra. In Hydra vulgaris (Hydra), this protein is Hydra actinoporin-like toxin 2.